The sequence spans 153 residues: Large ribosomal subunit protein bL9 (153 aa).

It belongs to the bacterial ribosomal protein bL9 family.

Binds to the 23S rRNA. This is Large ribosomal subunit protein bL9 from Micrococcus luteus (strain ATCC 4698 / DSM 20030 / JCM 1464 / CCM 169 / CCUG 5858 / IAM 1056 / NBRC 3333 / NCIMB 9278 / NCTC 2665 / VKM Ac-2230) (Micrococcus lysodeikticus).